We begin with the raw amino-acid sequence, 162 residues long: NADH-quinone oxidoreductase subunit I (162 aa).

2 4Fe-4S ferredoxin-type domains span residues 54-83 (RRYE…IESE) and 93-122 (TRYD…ETQI). Residues cysteine 63, cysteine 66, cysteine 69, cysteine 73, cysteine 102, cysteine 105, cysteine 108, and cysteine 112 each coordinate [4Fe-4S] cluster.

The protein belongs to the complex I 23 kDa subunit family. As to quaternary structure, NDH-1 is composed of 14 different subunits. Subunits NuoA, H, J, K, L, M, N constitute the membrane sector of the complex. Requires [4Fe-4S] cluster as cofactor.

It localises to the cell inner membrane. It carries out the reaction a quinone + NADH + 5 H(+)(in) = a quinol + NAD(+) + 4 H(+)(out). Its function is as follows. NDH-1 shuttles electrons from NADH, via FMN and iron-sulfur (Fe-S) centers, to quinones in the respiratory chain. The immediate electron acceptor for the enzyme in this species is believed to be ubiquinone. Couples the redox reaction to proton translocation (for every two electrons transferred, four hydrogen ions are translocated across the cytoplasmic membrane), and thus conserves the redox energy in a proton gradient. The chain is NADH-quinone oxidoreductase subunit I from Burkholderia vietnamiensis (strain G4 / LMG 22486) (Burkholderia cepacia (strain R1808)).